A 177-amino-acid chain; its full sequence is Parathyroid hormone-related protein (177 aa).

The first 24 residues, 1 to 24 (MLRRLVQQWSVAVFLLSYSVPSCG), serve as a signal peptide directing secretion. Residues 25–34 (RSVEGPGRRL) constitute a propeptide that is removed on maturation. The segment at 57–68 (RFFLHHLIAEIH) is important for receptor binding. The interval 74–177 (ATSEVSPNSK…PEPELDSRRH (104 aa)) is disordered. A compositionally biased stretch (polar residues) spans 76-90 (SEVSPNSKPAANTKN). The short motif at 108-129 (TNKVEPYKEQPLKTPGKKKKGK) is the Nuclear localization signal element. Residues 109-118 (NKVEPYKEQP) show a composition bias toward basic and acidic residues. The segment covering 122–132 (PGKKKKGKPGK) has biased composition (basic residues).

Belongs to the parathyroid hormone family. As to quaternary structure, PTHrP interacts with PTH1R (via N-terminal extracellular domain). There are several secretory forms, including osteostatin, arising from endoproteolytic cleavage of the initial translation product. Each of these secretory forms is believed to have one or more of its own receptors that mediates the normal paracrine, autocrine and endocrine actions.

It is found in the secreted. The protein localises to the cytoplasm. It localises to the nucleus. Functionally, neuroendocrine peptide which is a critical regulator of cellular and organ growth, development, migration, differentiation and survival and of epithelial calcium ion transport. Acts by binding to its receptor, PTH1R, activating G protein-coupled receptor signaling. Regulates endochondral bone development and epithelial-mesenchymal interactions during the formation of the mammary glands and teeth. Required for skeletal homeostasis. Promotes mammary mesenchyme differentiation and bud outgrowth by modulating mesenchymal cell responsiveness to BMPs. Up-regulates BMPR1A expression in the mammary mesenchyme and this increases the sensitivity of these cells to BMPs and allows them to respond to BMP4 in a paracrine and/or autocrine fashion. BMP4 signaling in the mesenchyme, in turn, triggers epithelial outgrowth and augments MSX2 expression, which causes the mammary mesenchyme to inhibit hair follicle formation within the nipple sheath. Potent inhibitor of osteoclastic bone resorption. This Oryctolagus cuniculus (Rabbit) protein is Parathyroid hormone-related protein (PTHLH).